The chain runs to 101 residues: HssA/B-like protein 40 (101 aa).

Residues 1–26 are disordered; that stretch reads MTLFSSISSMSTSMSGSKSSISSFGS.

This sequence belongs to the hssA/B family.

This chain is HssA/B-like protein 40 (hssl40), found in Dictyostelium discoideum (Social amoeba).